Here is a 314-residue protein sequence, read N- to C-terminus: MKEVSQQKKELVNEITQRIKASRSVAIVDTAGIRTRQIQDIRGKNRGKINLKVIKKTLLFKALENLGDEKLSKLKENSGGQIALLTSDLEPTEIYKIIESTFQKTAPRGGEIAPEDIVIQPMTTGFPPGPMMTEFQKVGLQTGVEKGKIAIKKETVFVKKGETIPKDKAKILEMLEIKPLEVGLQLLGLYSEGVVYSKEVLSLTPERIANDMAAAFSQAKAIAKSSMFFVDEVLRDLLAEAKIKADALALAGQFITEDNVKDFLVRANVNAIILNNVLNKGSTQETPEEKKEEAKKEEKSPDESISEGLGALFQ.

The segment at Gly281–Gln314 is disordered. The segment covering Pro287–Asp302 has biased composition (basic and acidic residues).

Belongs to the universal ribosomal protein uL10 family. In terms of assembly, part of the 50S ribosomal subunit. Forms part of the ribosomal stalk which helps the ribosome interact with GTP-bound translation factors. Forms a heptameric L10(L12)2(L12)2(L12)2 complex, where L10 forms an elongated spine to which the L12 dimers bind in a sequential fashion.

Its function is as follows. Forms part of the ribosomal stalk, playing a central role in the interaction of the ribosome with GTP-bound translation factors. The protein is Large ribosomal subunit protein uL10 of Thermoplasma acidophilum (strain ATCC 25905 / DSM 1728 / JCM 9062 / NBRC 15155 / AMRC-C165).